A 247-amino-acid polypeptide reads, in one-letter code: Small ribosomal subunit protein uS2 (247 aa).

This sequence belongs to the universal ribosomal protein uS2 family.

This Pseudomonas syringae pv. tomato (strain ATCC BAA-871 / DC3000) protein is Small ribosomal subunit protein uS2.